Reading from the N-terminus, the 717-residue chain is DNA ligase (717 aa).

NAD(+) contacts are provided by residues 44-48 (DADYD), 93-94 (SL), and E127. The N6-AMP-lysine intermediate role is filled by K129. Residues R150, E186, K302, and K326 each contribute to the NAD(+) site. Residues C431, C434, C455, and C461 each coordinate Zn(2+). The region spanning 639 to 717 (ATDSPVAGKT…EDEWLALIGG (79 aa)) is the BRCT domain.

The protein belongs to the NAD-dependent DNA ligase family. LigA subfamily. The cofactor is Mg(2+). Mn(2+) serves as cofactor.

It carries out the reaction NAD(+) + (deoxyribonucleotide)n-3'-hydroxyl + 5'-phospho-(deoxyribonucleotide)m = (deoxyribonucleotide)n+m + AMP + beta-nicotinamide D-nucleotide.. In terms of biological role, DNA ligase that catalyzes the formation of phosphodiester linkages between 5'-phosphoryl and 3'-hydroxyl groups in double-stranded DNA using NAD as a coenzyme and as the energy source for the reaction. It is essential for DNA replication and repair of damaged DNA. In Rhizobium meliloti (strain 1021) (Ensifer meliloti), this protein is DNA ligase.